A 442-amino-acid polypeptide reads, in one-letter code: Glycolipid 2-alpha-mannosyltransferase (442 aa).

Residues 1-11 are Cytoplasmic-facing; it reads MALFLSKRLLR. The chain crosses the membrane as a helical; Signal-anchor for type II membrane protein span at residues 12-30; the sequence is FTVIAGAVIVLLLTLNSNS. The tract at residues 31–118 is stem region; that stretch reads RTQQYIPSSI…YITPSFANKA (88 aa). Over 31-442 the chain is Lumenal; sequence RTQQYIPSSI…KPKNWKKFRE (412 aa). Residues 68-95 are disordered; sequence EQSALNSEASEDSEAMDEESKALKAAAE. Basic and acidic residues predominate over residues 85–95; that stretch reads EESKALKAAAE. Positions 119-442 are catalytic; it reads GKPKACYVTL…KPKNWKKFRE (324 aa). N-linked (GlcNAc...) asparagine glycosylation occurs at Asn-197. Glu-329 acts as the Nucleophile in catalysis.

This sequence belongs to the glycosyltransferase 15 family. Mn(2+) serves as cofactor.

It localises to the golgi apparatus membrane. The protein operates within protein modification; protein glycosylation. Mannosyltransferase that transfers an alpha-D-mannosyl residue from GDP-mannose into lipid-linked oligosaccharide, forming an alpha-(1-&gt;2)-D-mannosyl-D-mannose linkage. Required for the attachment of the third mannose residue of O-linked saccharides. The polypeptide is Glycolipid 2-alpha-mannosyltransferase (KRE2) (Saccharomyces cerevisiae (strain ATCC 204508 / S288c) (Baker's yeast)).